Reading from the N-terminus, the 92-residue chain is MELELRFFATFREVVGQKSIYWRVDDDATVGDVLRSLEAEYDGLAGRLIEDGEVKPHVNVLKNGREVVHLDGMATALDDGDAVSVFPPVAGG.

Residues lysine 18, lysine 55, and lysine 62 each participate in a glycyl lysine isopeptide (Lys-Gly) (interchain with G-Cter in SAMP3) cross-link. Glycine 92 bears the Glycyl adenylate; alternate mark. A Glycyl lysine isopeptide (Gly-Lys) (interchain with K-? in acceptor proteins); alternate cross-link involves residue glycine 92.

As to quaternary structure, monomer. The C-terminal glycine is likely acyl-adenylated (-COAMP) by UbaA.

In terms of biological role, functions as a protein modifier covalently attached to lysine residues of substrate proteins. The protein modification process is termed sampylation and involves the formation of an isopeptide bond between the SAMP3 C-terminal glycine carboxylate and the epsilon-amino group of lysine residues on target proteins. Seems to be able to form polymeric chains with itself at Lys-18, Lys-55 and Lys-62, similar to ubiquitin and other ubiquitin-like proteins. SAMP3 appears not to serve as a proteolytic signal in the cell to target proteins for degradation by proteasomes. May regulate molybdenum cofactor (MoCo) biosynthesis by inhibiting the activity of MPT synthase MoaE under aerobic conditions, providing a hierarchy of oxygen use prior to that of alternative electron acceptors such as DMSO. In Haloferax volcanii (strain ATCC 29605 / DSM 3757 / JCM 8879 / NBRC 14742 / NCIMB 2012 / VKM B-1768 / DS2) (Halobacterium volcanii), this protein is Small archaeal modifier protein 3 (samp3).